The chain runs to 365 residues: Class I histocompatibility antigen, B alpha chain (365 aa).

An N-terminal signal peptide occupies residues 1 to 24; the sequence is MTVMAPRTLLLLLSGALVLTETWA. An alpha-1 region spans residues 25–114; that stretch reads GSHSMRYFST…ALGYYNQSEA (90 aa). The Extracellular segment spans residues 25 to 308; it reads GSHSMRYFST…EPPSQPTIPI (284 aa). N-linked (GlcNAc...) asparagine glycosylation is present at Asn-110. The tract at residues 115-206 is alpha-2; sequence GSHTIQMMSG…ENGKETLQRA (92 aa). 2 disulfides stabilise this stretch: Cys-125–Cys-188 and Cys-227–Cys-283. The tract at residues 207 to 298 is alpha-3; the sequence is EPPKTHVTHH…GLPEPLTLRW (92 aa). Residues 209–297 enclose the Ig-like C1-type domain; that stretch reads PKTHVTHHPV…EGLPEPLTLR (89 aa). Residues 299 to 308 are connecting peptide; that stretch reads EPPSQPTIPI. A helical transmembrane segment spans residues 309 to 332; that stretch reads MGIVAILAILGAVVTGAVVTAVMW. Residues 333–365 lie on the Cytoplasmic side of the membrane; that stretch reads RKKSSDKKGGSYSQAARSDSAQGSDVSLTACKV. The interval 337 to 361 is disordered; that stretch reads SDKKGGSYSQAARSDSAQGSDVSLT. Over residues 346 to 359 the composition is skewed to polar residues; the sequence is QAARSDSAQGSDVS. A phosphoserine mark is found at Ser-356 and Ser-359.

Belongs to the MHC class I family. Heterodimer of an alpha chain and a beta chain (beta-2-microglobulin).

Its subcellular location is the membrane. In terms of biological role, involved in the presentation of foreign antigens to the immune system. This Saguinus oedipus (Cotton-top tamarin) protein is Class I histocompatibility antigen, B alpha chain.